The sequence spans 1258 residues: Regulator of G-protein signaling 22 (1258 aa).

The disordered stretch occupies residues 581–604 (QQLGRSEPLNAVSSKDGGLEKGSK). RGS domains are found at residues 845-973 (TFTD…ASRQ) and 1014-1138 (AFRK…TDEK). Positions 1145–1172 (RRQEHKQKRKASDTEEDKAGKSGVKQYA) are disordered. A compositionally biased stretch (basic and acidic residues) spans 1154-1164 (KASDTEEDKAG).

In terms of assembly, interacts with GNA11, GNA12 and GNA13. Expressed testis, including in Leydig cells and spermatogenic cells from the spermatogonia to spermatid stages (at protein level).

It is found in the cytoplasm. The protein localises to the nucleus. Inhibits signal transduction by increasing the GTPase activity of G protein alpha subunits thereby driving them into their inactive GDP-bound form. This is Regulator of G-protein signaling 22 (Rgs22) from Mus musculus (Mouse).